The primary structure comprises 314 residues: tRNA dimethylallyltransferase (314 aa).

Position 12-19 (12-19) interacts with ATP; sequence GPTASGKT. 14–19 contacts substrate; sequence TASGKT. 4 interaction with substrate tRNA regions span residues 37–40, 161–165, 242–247, and 275–282; these read DSAL, QRINR, RCVGYR, and KRQITWLR.

This sequence belongs to the IPP transferase family. In terms of assembly, monomer. The cofactor is Mg(2+).

It carries out the reaction adenosine(37) in tRNA + dimethylallyl diphosphate = N(6)-dimethylallyladenosine(37) in tRNA + diphosphate. Its function is as follows. Catalyzes the transfer of a dimethylallyl group onto the adenine at position 37 in tRNAs that read codons beginning with uridine, leading to the formation of N6-(dimethylallyl)adenosine (i(6)A). The polypeptide is tRNA dimethylallyltransferase (Mannheimia succiniciproducens (strain KCTC 0769BP / MBEL55E)).